Consider the following 71-residue polypeptide: Translation initiation factor IF-1 (71 aa).

In terms of domain architecture, S1-like spans M1–Y71.

Belongs to the IF-1 family. In terms of assembly, component of the 30S ribosomal translation pre-initiation complex which assembles on the 30S ribosome in the order IF-2 and IF-3, IF-1 and N-formylmethionyl-tRNA(fMet); mRNA recruitment can occur at any time during PIC assembly.

The protein resides in the cytoplasm. One of the essential components for the initiation of protein synthesis. Stabilizes the binding of IF-2 and IF-3 on the 30S subunit to which N-formylmethionyl-tRNA(fMet) subsequently binds. Helps modulate mRNA selection, yielding the 30S pre-initiation complex (PIC). Upon addition of the 50S ribosomal subunit IF-1, IF-2 and IF-3 are released leaving the mature 70S translation initiation complex. In Flavobacterium johnsoniae (strain ATCC 17061 / DSM 2064 / JCM 8514 / BCRC 14874 / CCUG 350202 / NBRC 14942 / NCIMB 11054 / UW101) (Cytophaga johnsonae), this protein is Translation initiation factor IF-1.